We begin with the raw amino-acid sequence, 415 residues long: Serine hydroxymethyltransferase (415 aa).

Residues Leu-118 and 122 to 124 (GHL) each bind (6S)-5,6,7,8-tetrahydrofolate. At Lys-227 the chain carries N6-(pyridoxal phosphate)lysine.

This sequence belongs to the SHMT family. In terms of assembly, homodimer. Pyridoxal 5'-phosphate is required as a cofactor.

Its subcellular location is the cytoplasm. It carries out the reaction (6R)-5,10-methylene-5,6,7,8-tetrahydrofolate + glycine + H2O = (6S)-5,6,7,8-tetrahydrofolate + L-serine. It functions in the pathway one-carbon metabolism; tetrahydrofolate interconversion. Its pathway is amino-acid biosynthesis; glycine biosynthesis; glycine from L-serine: step 1/1. In terms of biological role, catalyzes the reversible interconversion of serine and glycine with tetrahydrofolate (THF) serving as the one-carbon carrier. This reaction serves as the major source of one-carbon groups required for the biosynthesis of purines, thymidylate, methionine, and other important biomolecules. Also exhibits THF-independent aldolase activity toward beta-hydroxyamino acids, producing glycine and aldehydes, via a retro-aldol mechanism. This Elusimicrobium minutum (strain Pei191) protein is Serine hydroxymethyltransferase.